The primary structure comprises 309 residues: Phytoene synthase (309 aa).

The protein belongs to the phytoene/squalene synthase family. The cofactor is ATP. Mn(2+) serves as cofactor. It depends on Mg(2+) as a cofactor.

The protein operates within carotenoid biosynthesis; phytoene biosynthesis. Functionally, involved in the biosynthesis of carotenoids. Catalyzes the condensation of two molecules of geranylgeranyl diphosphate (GGPP) to give prephytoene diphosphate (PPPP) and the subsequent rearrangement of the cyclopropylcarbinyl intermediate to yield phytoene. In Pseudescherichia vulneris (Escherichia vulneris), this protein is Phytoene synthase (crtB).